The primary structure comprises 526 residues: Probable DNA ligase (526 aa).

Glu228 contacts ATP. Residue Lys230 is the N6-AMP-lysine intermediate of the active site. Residues Arg235, Arg250, Glu279, Phe319, Arg391, and Lys397 each coordinate ATP.

It belongs to the ATP-dependent DNA ligase family. Requires Mg(2+) as cofactor.

It carries out the reaction ATP + (deoxyribonucleotide)n-3'-hydroxyl + 5'-phospho-(deoxyribonucleotide)m = (deoxyribonucleotide)n+m + AMP + diphosphate.. Functionally, DNA ligase that seals nicks in double-stranded DNA during DNA replication, DNA recombination and DNA repair. This chain is Probable DNA ligase, found in Mycobacterium avium (strain 104).